A 486-amino-acid polypeptide reads, in one-letter code: MKVVFVSYEVFPFAKVGGLADVAGTLPKYLKKHGVDVTIVMPKHRIVEKNAEKFGYEIKKVAEGLSVSHVKTDQKFDIYESVLPGSDVKTYFVANDYYFSAEDVYAGPDLGEQAIFFCAATLDLVKHLDLKPDIVHVNDWQTALIPVYLKTVYRDDPYFSRTATVLTIHNLGYQGVFDPKYLSFAGLPDYVFTIDGLEFYRQLNFLKGGIVFSDVINTVSPTYAEEIQTEEYGEKLEGVLRMRSKDLYGILNGIDYELYNPATDRYIYVNYDVNRLELKWENKVKLQEELGLPVNKETAVAGLISRLVPQKGLDLLVDVMDYLMLFDLQIVVLGTGDEQYENAFRKFQERYPDKVSANIKFDVELAQKIYAGADIFLMPSRYEPCGLGQMFSMRYGTIPVVRYTGGLADTVKEYDPQSMEGTGFGFKKYDSAHLLKAVSKALHFYYREKDHWRRIMTNAMNTDLSWDRSAKEYVDLYKKALAKVGR.

Residue Lys15 coordinates ADP-alpha-D-glucose.

The protein belongs to the glycosyltransferase 1 family. Bacterial/plant glycogen synthase subfamily.

The enzyme catalyses [(1-&gt;4)-alpha-D-glucosyl](n) + ADP-alpha-D-glucose = [(1-&gt;4)-alpha-D-glucosyl](n+1) + ADP + H(+). Its pathway is glycan biosynthesis; glycogen biosynthesis. Its function is as follows. Synthesizes alpha-1,4-glucan chains using ADP-glucose. In Thermotoga petrophila (strain ATCC BAA-488 / DSM 13995 / JCM 10881 / RKU-1), this protein is Glycogen synthase.